The primary structure comprises 244 residues: uncharacterized protein (244 aa).

Composition is skewed to basic and acidic residues over residues 1-10 and 100-127; these read MNDPFARMET and GTRGDPAREEVAGAEDLPHAGGEDHGEE. 3 disordered regions span residues 1–79, 100–130, and 219–244; these read MNDP…GEEL, GTRGDPAREEVAGAEDLPHAGGEDHGEEPNY, and TGASRVHAAGRRVSPSPGTWLEEIKL.

This is an uncharacterized protein from Homo sapiens (Human).